The sequence spans 283 residues: Formamidopyrimidine-DNA glycosylase (283 aa).

Residue P2 is the Schiff-base intermediate with DNA of the active site. E3 functions as the Proton donor in the catalytic mechanism. K60 (proton donor; for beta-elimination activity) is an active-site residue. DNA is bound by residues H100, R119, and R164. The FPG-type zinc-finger motif lies at 249-283 (WVYNRAGEPCKVCGDVIQRIKLGGRSSHFCRQCQV). The active-site Proton donor; for delta-elimination activity is the R273.

Belongs to the FPG family. In terms of assembly, monomer. Zn(2+) is required as a cofactor.

The catalysed reaction is Hydrolysis of DNA containing ring-opened 7-methylguanine residues, releasing 2,6-diamino-4-hydroxy-5-(N-methyl)formamidopyrimidine.. It carries out the reaction 2'-deoxyribonucleotide-(2'-deoxyribose 5'-phosphate)-2'-deoxyribonucleotide-DNA = a 3'-end 2'-deoxyribonucleotide-(2,3-dehydro-2,3-deoxyribose 5'-phosphate)-DNA + a 5'-end 5'-phospho-2'-deoxyribonucleoside-DNA + H(+). Involved in base excision repair of DNA damaged by oxidation or by mutagenic agents. Acts as a DNA glycosylase that recognizes and removes damaged bases. Has a preference for oxidized purines, such as 7,8-dihydro-8-oxoguanine (8-oxoG). Has AP (apurinic/apyrimidinic) lyase activity and introduces nicks in the DNA strand. Cleaves the DNA backbone by beta-delta elimination to generate a single-strand break at the site of the removed base with both 3'- and 5'-phosphates. In Nostoc sp. (strain PCC 7120 / SAG 25.82 / UTEX 2576), this protein is Formamidopyrimidine-DNA glycosylase.